A 130-amino-acid chain; its full sequence is Glutamate-rich protein 4 (130 aa).

Residues 91–104 are compositionally biased toward acidic residues; it reads EEEEESSKEEEEDQ. Positions 91-130 are disordered; it reads EEEEESSKEEEEDQEPQRKQEEEHLEACPAPHPPDFEMMI. The segment covering 105–116 has biased composition (basic and acidic residues); the sequence is EPQRKQEEEHLE.

This Homo sapiens (Human) protein is Glutamate-rich protein 4 (ERICH4).